The primary structure comprises 461 residues: Protein transport protein HofB homolog (461 aa).

222 to 229 (GPTGSGKT) contributes to the ATP binding site.

It belongs to the GSP E family.

The polypeptide is Protein transport protein HofB homolog (hofB) (Escherichia coli (strain K12)).